The chain runs to 309 residues: Homoserine kinase (309 aa).

91-101 serves as a coordination point for ATP; it reads PLARGLGSSAA.

This sequence belongs to the GHMP kinase family. Homoserine kinase subfamily.

It localises to the cytoplasm. It catalyses the reaction L-homoserine + ATP = O-phospho-L-homoserine + ADP + H(+). The protein operates within amino-acid biosynthesis; L-threonine biosynthesis; L-threonine from L-aspartate: step 4/5. In terms of biological role, catalyzes the ATP-dependent phosphorylation of L-homoserine to L-homoserine phosphate. This chain is Homoserine kinase, found in Bacillus velezensis (strain DSM 23117 / BGSC 10A6 / LMG 26770 / FZB42) (Bacillus amyloliquefaciens subsp. plantarum).